Here is a 157-residue protein sequence, read N- to C-terminus: Small ribosomal subunit protein uS7 (157 aa).

This sequence belongs to the universal ribosomal protein uS7 family. Part of the 30S ribosomal subunit. Contacts proteins S9 and S11.

Functionally, one of the primary rRNA binding proteins, it binds directly to 16S rRNA where it nucleates assembly of the head domain of the 30S subunit. Is located at the subunit interface close to the decoding center, probably blocks exit of the E-site tRNA. The protein is Small ribosomal subunit protein uS7 of Marinomonas sp. (strain MWYL1).